Here is a 365-residue protein sequence, read N- to C-terminus: Histidinol-phosphate aminotransferase (365 aa).

The residue at position 223 (Lys223) is an N6-(pyridoxal phosphate)lysine.

The protein belongs to the class-II pyridoxal-phosphate-dependent aminotransferase family. Histidinol-phosphate aminotransferase subfamily. As to quaternary structure, homodimer. The cofactor is pyridoxal 5'-phosphate.

The enzyme catalyses L-histidinol phosphate + 2-oxoglutarate = 3-(imidazol-4-yl)-2-oxopropyl phosphate + L-glutamate. Its pathway is amino-acid biosynthesis; L-histidine biosynthesis; L-histidine from 5-phospho-alpha-D-ribose 1-diphosphate: step 7/9. This chain is Histidinol-phosphate aminotransferase, found in Brucella abortus (strain 2308).